The chain runs to 248 residues: Probable transcriptional regulatory protein Oant_1200 (248 aa).

It belongs to the TACO1 family.

The protein localises to the cytoplasm. The polypeptide is Probable transcriptional regulatory protein Oant_1200 (Brucella anthropi (strain ATCC 49188 / DSM 6882 / CCUG 24695 / JCM 21032 / LMG 3331 / NBRC 15819 / NCTC 12168 / Alc 37) (Ochrobactrum anthropi)).